Consider the following 258-residue polypeptide: Microtubule-associated protein RP/EB family member 1 (258 aa).

Positions 14-116 (NLSRHDMLAW…FVQWFKKFFD (103 aa)) constitute a Calponin-homology (CH) domain. The EB1 C-terminal domain occupies 175–245 (KKAAGDDESA…LYATDEGFVI (71 aa)).

This sequence belongs to the MAPRE family.

The protein resides in the cytoplasm. It is found in the cytoskeleton. The protein localises to the microtubule organizing center. Its subcellular location is the centrosome. It localises to the golgi apparatus. The protein resides in the spindle. It is found in the spindle pole. Plus-end tracking protein (+TIP) that binds to the plus-end of microtubules and regulates the dynamics of the microtubule cytoskeleton. Promotes cytoplasmic microtubule nucleation and elongation. Involved in mitotic spindle positioning by stabilizing microtubules and promoting dynamic connection between astral microtubules and the cortex during mitotic chromosome segregation. In Gallus gallus (Chicken), this protein is Microtubule-associated protein RP/EB family member 1 (MAPRE1).